We begin with the raw amino-acid sequence, 355 residues long: 3-dehydroquinate synthase (355 aa).

NAD(+) is bound by residues 71–76, 105–109, 129–130, K142, and K151; these read EGEASK, GVVGD, and TS. 3 residues coordinate Zn(2+): E184, H246, and H263.

Belongs to the sugar phosphate cyclases superfamily. Dehydroquinate synthase family. It depends on Co(2+) as a cofactor. The cofactor is Zn(2+). NAD(+) serves as cofactor.

The protein localises to the cytoplasm. The enzyme catalyses 7-phospho-2-dehydro-3-deoxy-D-arabino-heptonate = 3-dehydroquinate + phosphate. It functions in the pathway metabolic intermediate biosynthesis; chorismate biosynthesis; chorismate from D-erythrose 4-phosphate and phosphoenolpyruvate: step 2/7. In terms of biological role, catalyzes the conversion of 3-deoxy-D-arabino-heptulosonate 7-phosphate (DAHP) to dehydroquinate (DHQ). This is 3-dehydroquinate synthase from Streptococcus thermophilus (strain ATCC BAA-491 / LMD-9).